A 265-amino-acid polypeptide reads, in one-letter code: Indole-3-glycerol phosphate synthase (265 aa).

The protein belongs to the TrpC family.

It catalyses the reaction 1-(2-carboxyphenylamino)-1-deoxy-D-ribulose 5-phosphate + H(+) = (1S,2R)-1-C-(indol-3-yl)glycerol 3-phosphate + CO2 + H2O. It functions in the pathway amino-acid biosynthesis; L-tryptophan biosynthesis; L-tryptophan from chorismate: step 4/5. The chain is Indole-3-glycerol phosphate synthase from Syntrophobacter fumaroxidans (strain DSM 10017 / MPOB).